The primary structure comprises 315 residues: KH domain-containing protein At5g56140 (315 aa).

Disordered regions lie at residues 1-53 (MMMM…GGLR) and 136-158 (SQFP…SPGS). Over residues 7–28 (LGGGGGGGGGSGGGIGGGGGGR) the composition is skewed to gly residues. Polar residues-rich tracts occupy residues 31–53 (TYSS…GGLR) and 136–146 (SQFPSERSVPS). In terms of domain architecture, KH spans 171 to 238 (DIPVDNYPNF…EHLNEPLHIL (68 aa)). The segment at 289 to 315 (REEGSPMSGSVSPYNSLGMKRAKTREG) is disordered. Position 300 is a phosphoserine (Ser300).

Its subcellular location is the nucleus. The chain is KH domain-containing protein At5g56140 from Arabidopsis thaliana (Mouse-ear cress).